Consider the following 608-residue polypeptide: Malonate--CoA ligase (608 aa).

Belongs to the ATP-dependent AMP-binding enzyme family. In terms of tissue distribution, expressed in flowers.

Its subcellular location is the cytoplasm. The protein resides in the nucleus. It carries out the reaction malonate + ATP + CoA = malonyl-CoA + AMP + diphosphate. Malonate--CoA ligase that catalyzes the formation of malonyl-CoA directly from malonate and CoA. May be required for the detoxification of malonate. This Arabidopsis thaliana (Mouse-ear cress) protein is Malonate--CoA ligase (AAE13).